Here is a 340-residue protein sequence, read N- to C-terminus: Phosphate acyltransferase (340 aa).

This sequence belongs to the PlsX family. In terms of assembly, homodimer. Probably interacts with PlsY.

Its subcellular location is the cytoplasm. It carries out the reaction a fatty acyl-[ACP] + phosphate = an acyl phosphate + holo-[ACP]. It participates in lipid metabolism; phospholipid metabolism. In terms of biological role, catalyzes the reversible formation of acyl-phosphate (acyl-PO(4)) from acyl-[acyl-carrier-protein] (acyl-ACP). This enzyme utilizes acyl-ACP as fatty acyl donor, but not acyl-CoA. This Marinobacter nauticus (strain ATCC 700491 / DSM 11845 / VT8) (Marinobacter aquaeolei) protein is Phosphate acyltransferase.